Reading from the N-terminus, the 393-residue chain is Bone morphogenetic protein 15 (393 aa).

An N-terminal signal peptide occupies residues 1-25 (MVLLSILRILLWGLVLFMEHRVQMT). A propeptide spanning residues 26-268 (QVGQPSIAHL…DPSLLLRRAR (243 aa)) is cleaved from the precursor. N86 and N237 each carry an N-linked (GlcNAc...) asparagine glycan. 3 disulfides stabilise this stretch: C292–C358, C321–C390, and C325–C392. Residue N374 is glycosylated (N-linked (GlcNAc...) asparagine).

The protein belongs to the TGF-beta family. Homodimer. But, in contrast to other members of this family, cannot be disulfide-linked.

The protein resides in the secreted. Its function is as follows. May be involved in follicular development. Oocyte-specific growth/differentiation factor that stimulates folliculogenesis and granulosa cell (GC) growth. The sequence is that of Bone morphogenetic protein 15 (BMP15) from Ovis aries (Sheep).